Here is a 1096-residue protein sequence, read N- to C-terminus: Cation-transporting ATPase 5 (1096 aa).

Topologically, residues 1–19 are cytoplasmic; sequence MDSIELKQLVPENDSEPGT. The chain crosses the membrane as a helical span at residues 20-41; that stretch reads PRQLLFQHYDISNEETIGIKPF. At 42–47 the chain is on the lumenal side; the sequence is KSIPAK. Residues 48-70 form a helical membrane-spanning segment; that stretch reads VYILRVTEILTLGLLHLILTWLP. Over 71–193 the chain is Cytoplasmic; the sequence is EFRLKWIEAP…LVSTKKSIVT (123 aa). The chain crosses the membrane as a helical span at residues 194–216; it reads ILLNEVLHPFYLFQAVSVLIWLC. The Lumenal segment spans residues 217 to 220; sequence DSFV. Residues 221–238 form a helical membrane-spanning segment; sequence FYSCCIVFISSYSIFLSV. Residues 239-391 are Cytoplasmic-facing; that stretch reads KESKESENRI…NLRPSQLYLD (153 aa). Residues 392–412 traverse the membrane as a helical segment; that stretch reads SMSFLKTMAILSFVSIVFIAI. Residues 413–425 lie on the Lumenal side of the membrane; that stretch reads YLNLYNASFGHVV. Residues 426 to 447 form a helical membrane-spanning segment; it reads LRSLDVLTILVPPALPATLSVG. Topologically, residues 448-895 are cytoplasmic; the sequence is IANSIARLSR…SLILSHRCFQ (448 aa). Asp-480 functions as the 4-aspartylphosphate intermediate in the catalytic mechanism. Mg(2+) is bound by residues Asp-838 and Asp-842. The chain crosses the membrane as a helical span at residues 896–915; sequence YMVLCAIVQFSGVFFLYLKN. The Lumenal segment spans residues 916–922; that stretch reads YNFNDNQ. The helical transmembrane segment at 923–940 threads the bilayer; it reads FLFMDLLIIFPLSAAMSY. Topologically, residues 941–958 are cytoplasmic; it reads FDPAQNLTSNRPNSTLFG. Residues 959 to 982 form a helical membrane-spanning segment; that stretch reads KGRVKDLGIQSVLIWLSHGLLTLI. Residues 983–1003 are Lumenal-facing; sequence LHELNWVELPEWQLEKSNTKN. A helical membrane pass occupies residues 1004–1026; sequence VLVTSIFLLSSLQYLGICIGINQ. Over 1027–1040 the chain is Cytoplasmic; it reads SSEFLSPIWKKKTY. A helical membrane pass occupies residues 1041 to 1060; sequence VCLCTTIGLCNIYLCFANEN. At 1061-1075 the chain is on the lumenal side; the sequence is HIISRCLQITRLPTL. The helical transmembrane segment at 1076–1096 threads the bilayer; it reads YRFIILFMGVISCCLTSILNM.

Belongs to the cation transport ATPase (P-type) (TC 3.A.3) family. Type V subfamily.

Its subcellular location is the endoplasmic reticulum membrane. The protein resides in the golgi apparatus membrane. It catalyses the reaction ATP + H2O = ADP + phosphate + H(+). In terms of biological role, plays a role in regulating calcium and manganese homeostasis responsible for cell cycle progression. In Schizosaccharomyces pombe (strain 972 / ATCC 24843) (Fission yeast), this protein is Cation-transporting ATPase 5 (cta5).